Reading from the N-terminus, the 31-residue chain is Photosystem I reaction center subunit XII (31 aa).

The chain crosses the membrane as a helical span at residues Gln-7–Gly-26.

Belongs to the PsaM family.

Its subcellular location is the plastid. The protein localises to the chloroplast thylakoid membrane. In Euglena granulata, this protein is Photosystem I reaction center subunit XII.